The primary structure comprises 258 residues: Serine/arginine-rich splicing factor x16 (258 aa).

The RRM domain maps to 8–81 (RKVYVGDLGN…RRARVELSTG (74 aa)). 2 disordered regions span residues 81 to 113 (GKYA…GGRG) and 130 to 258 (CRER…VSRD). Residues 86-103 (SGGGGGGGGGGGGGGGLG) show a composition bias toward gly residues. The segment covering 104 to 113 (GRDRGGGGRG) has biased composition (basic and acidic residues). The CCHC-type zinc finger occupies 116–132 (KCYECGGRGHFARHCRE). 2 stretches are compositionally biased toward basic residues: residues 130–141 (CRERKARQRRRS) and 149–166 (STSR…RSRS). Basic and acidic residues-rich tracts occupy residues 180–197 (NGRD…HERN) and 210–221 (RRYEDEDDDRVR). 2 stretches are compositionally biased toward low complexity: residues 231 to 240 (RSASPAVRRG) and 249 to 258 (SSASRSVSRD).

In terms of assembly, interacts (via Arg/Ser-rich region) with Alsin2/CG7564, Rbp1 and Doa (via N-terminus). Post-translationally, highly phosphorylated. May be phosphorylated by the serine/threonine-protein kinase Doa.

It localises to the nucleus. Serine/arginine-rich splicing factor (SR protein) involved in differential exon usage during RNA transcript processing, probably by binding exonic splicing enhancer elements and recruiting components of the splicing machinery. Binds RNA stem-loop structures with consensus sequence 5'-CCGUNUNKNW-3'. Regulator of genes involved in lipid and carbohydrate metabolism, the immune response and the response to xenobiotics. In Drosophila melanogaster (Fruit fly), this protein is Serine/arginine-rich splicing factor x16.